The chain runs to 552 residues: Dihydroxy-acid dehydratase (552 aa).

Asp78 is a binding site for Mg(2+). Cys119 is a [2Fe-2S] cluster binding site. Asp120 and Lys121 together coordinate Mg(2+). Residue Lys121 is modified to N6-carboxylysine. Residue Cys191 coordinates [2Fe-2S] cluster. Mg(2+) is bound at residue Glu442. Residue Ser468 is the Proton acceptor of the active site.

The protein belongs to the IlvD/Edd family. Homodimer. [2Fe-2S] cluster serves as cofactor. The cofactor is Mg(2+).

The enzyme catalyses (2R)-2,3-dihydroxy-3-methylbutanoate = 3-methyl-2-oxobutanoate + H2O. It carries out the reaction (2R,3R)-2,3-dihydroxy-3-methylpentanoate = (S)-3-methyl-2-oxopentanoate + H2O. It participates in amino-acid biosynthesis; L-isoleucine biosynthesis; L-isoleucine from 2-oxobutanoate: step 3/4. It functions in the pathway amino-acid biosynthesis; L-valine biosynthesis; L-valine from pyruvate: step 3/4. Functionally, functions in the biosynthesis of branched-chain amino acids. Catalyzes the dehydration of (2R,3R)-2,3-dihydroxy-3-methylpentanoate (2,3-dihydroxy-3-methylvalerate) into 2-oxo-3-methylpentanoate (2-oxo-3-methylvalerate) and of (2R)-2,3-dihydroxy-3-methylbutanoate (2,3-dihydroxyisovalerate) into 2-oxo-3-methylbutanoate (2-oxoisovalerate), the penultimate precursor to L-isoleucine and L-valine, respectively. The chain is Dihydroxy-acid dehydratase from Ruminiclostridium cellulolyticum (strain ATCC 35319 / DSM 5812 / JCM 6584 / H10) (Clostridium cellulolyticum).